A 384-amino-acid chain; its full sequence is 1-deoxy-D-xylulose 5-phosphate reductoisomerase (384 aa).

Residues Thr-10, Gly-11, Ser-12, Ile-13, Asn-38, and Asn-120 each coordinate NADPH. Lys-121 serves as a coordination point for 1-deoxy-D-xylulose 5-phosphate. Residue Glu-122 coordinates NADPH. Asp-146 is a Mn(2+) binding site. Positions 147, 148, 172, and 195 each coordinate 1-deoxy-D-xylulose 5-phosphate. Position 148 (Glu-148) interacts with Mn(2+). Residue Gly-201 coordinates NADPH. The 1-deoxy-D-xylulose 5-phosphate site is built by Ser-208, Asn-213, Lys-214, and Glu-217. Mn(2+) is bound at residue Glu-217.

Belongs to the DXR family. The cofactor is Mg(2+). Requires Mn(2+) as cofactor.

It catalyses the reaction 2-C-methyl-D-erythritol 4-phosphate + NADP(+) = 1-deoxy-D-xylulose 5-phosphate + NADPH + H(+). Its pathway is isoprenoid biosynthesis; isopentenyl diphosphate biosynthesis via DXP pathway; isopentenyl diphosphate from 1-deoxy-D-xylulose 5-phosphate: step 1/6. In terms of biological role, catalyzes the NADPH-dependent rearrangement and reduction of 1-deoxy-D-xylulose-5-phosphate (DXP) to 2-C-methyl-D-erythritol 4-phosphate (MEP). The polypeptide is 1-deoxy-D-xylulose 5-phosphate reductoisomerase (Protochlamydia amoebophila (strain UWE25)).